A 397-amino-acid chain; its full sequence is Flavohemoprotein (397 aa).

Residues 4-140 (SFSPHTITLI…IANLLKDREA (137 aa)) form the Globin domain. Histidine 87 is a binding site for heme b. Active-site charge relay system residues include tyrosine 97 and glutamate 139. The reductase stretch occupies residues 151–397 (GGWIHWRRFV…FGPMDEEMAA (247 aa)). Residues 154–258 (IHWRRFVISK…TPPVGDFFLP (105 aa)) form the FAD-binding FR-type domain. FAD contacts are provided by residues tyrosine 192 and 207–210 (RNYS). 271-276 (GVGLTP) contacts NADP(+). FAD is bound at residue 387–390 (FFGP).

Belongs to the globin family. Two-domain flavohemoproteins subfamily. It in the C-terminal section; belongs to the flavoprotein pyridine nucleotide cytochrome reductase family. Heme b is required as a cofactor. The cofactor is FAD.

It catalyses the reaction 2 nitric oxide + NADPH + 2 O2 = 2 nitrate + NADP(+) + H(+). It carries out the reaction 2 nitric oxide + NADH + 2 O2 = 2 nitrate + NAD(+) + H(+). In terms of biological role, is involved in NO detoxification in an aerobic process, termed nitric oxide dioxygenase (NOD) reaction that utilizes O(2) and NAD(P)H to convert NO to nitrate, which protects the bacterium from various noxious nitrogen compounds. Therefore, plays a central role in the inducible response to nitrosative stress. This chain is Flavohemoprotein, found in Xylella fastidiosa (strain 9a5c).